Here is a 42-residue protein sequence, read N- to C-terminus: Small protein MntS (42 aa).

It is found in the cytoplasm. In terms of biological role, required for repression of mntH by MntR. May function as a chaperone that makes manganese more available by delivering it to the necessary cellular locations when manganese is limiting. This Escherichia coli (strain K12) protein is Small protein MntS (mntS).